The following is a 254-amino-acid chain: DNA repair protein RecO (254 aa).

It belongs to the RecO family.

Involved in DNA repair and RecF pathway recombination. The polypeptide is DNA repair protein RecO (Anaeromyxobacter dehalogenans (strain 2CP-C)).